The sequence spans 365 residues: MIKFNSTNKTYWLPIYIMNDTSFQSGMYLYLLLTEILLYVGTGVIICKTVRTFLKIRLFHRNMNIMTALFLCQWFEAIAAKLLIIPYQIGVIRFSDYNKPYVSWWTDNEQEIIVLPEPTANSNALVISGFLIWHYAYTMIFGILNLGIERIFATVMLKDYENKPRLYIPVFLITSTHLITLTFSYFVLTNRTGFYLGTSPCFLNSALVVMTFLAVWKVNKHRHEKLEGSGPGCDYTLSQQFQVRENYRALKLAKNLVIVVLCAISVPCALLICLVIGAIPSFRMIFIHIMENFIYLNPVIICSTLMFSAPAWRAEYLKLIPGYKKIKSTRVFVVRPKPQTTHRASSTVVHDEGQMYFEQLNNSWK.

The next 7 helical transmembrane spans lie at 26–46 (GMYL…GVII), 65–85 (IMTA…LLII), 124–144 (ALVI…FGIL), 168–188 (IPVF…YFVL), 196–216 (LGTS…LAVW), 256–276 (LVIV…CLVI), and 285–305 (IFIH…CSTL).

The protein belongs to the nematode receptor-like protein sre family.

It is found in the membrane. The chain is Serpentine receptor class epsilon-38 (sre-38) from Caenorhabditis elegans.